We begin with the raw amino-acid sequence, 231 residues long: MKRAVVVFSGGQDSTTCLVQALQQYDEVHCVTFDYGQRHRAEIDVARELALKLGARAHKVLDVTLLNELAVSSLTRDSIPVPDYEPEADGIPNTFVPGRNILFLTLAAIYAYQVKAEAVITGVCETDFSGYPDCRDEFVKALNHAVSLGMAKDIRFETPLMWIDKAETWALADYYGKLDLVRNETLTCYNGIKGDGCGHCAACNLRANGLNHYLADKPTVMAAMKQKTGLR.

Phe-8–Leu-18 contributes to the ATP binding site. Zn(2+) is bound by residues Cys-188, Cys-197, Cys-200, and Cys-203.

This sequence belongs to the QueC family. It depends on Zn(2+) as a cofactor.

The catalysed reaction is 7-carboxy-7-deazaguanine + NH4(+) + ATP = 7-cyano-7-deazaguanine + ADP + phosphate + H2O + H(+). Its pathway is purine metabolism; 7-cyano-7-deazaguanine biosynthesis. Functionally, catalyzes the ATP-dependent conversion of 7-carboxy-7-deazaguanine (CDG) to 7-cyano-7-deazaguanine (preQ(0)). The chain is 7-cyano-7-deazaguanine synthase from Escherichia coli (strain SE11).